The sequence spans 557 residues: Dihydroxy-acid dehydratase (557 aa).

Residue cysteine 49 coordinates [2Fe-2S] cluster. A Mg(2+)-binding site is contributed by aspartate 81. Cysteine 122 contributes to the [2Fe-2S] cluster binding site. Mg(2+) contacts are provided by aspartate 123 and lysine 124. Lysine 124 bears the N6-carboxylysine mark. Cysteine 194 provides a ligand contact to [2Fe-2S] cluster. Position 446 (glutamate 446) interacts with Mg(2+). Serine 472 (proton acceptor) is an active-site residue.

This sequence belongs to the IlvD/Edd family. As to quaternary structure, homodimer. Requires [2Fe-2S] cluster as cofactor. The cofactor is Mg(2+).

It catalyses the reaction (2R)-2,3-dihydroxy-3-methylbutanoate = 3-methyl-2-oxobutanoate + H2O. The enzyme catalyses (2R,3R)-2,3-dihydroxy-3-methylpentanoate = (S)-3-methyl-2-oxopentanoate + H2O. Its pathway is amino-acid biosynthesis; L-isoleucine biosynthesis; L-isoleucine from 2-oxobutanoate: step 3/4. It participates in amino-acid biosynthesis; L-valine biosynthesis; L-valine from pyruvate: step 3/4. Functions in the biosynthesis of branched-chain amino acids. Catalyzes the dehydration of (2R,3R)-2,3-dihydroxy-3-methylpentanoate (2,3-dihydroxy-3-methylvalerate) into 2-oxo-3-methylpentanoate (2-oxo-3-methylvalerate) and of (2R)-2,3-dihydroxy-3-methylbutanoate (2,3-dihydroxyisovalerate) into 2-oxo-3-methylbutanoate (2-oxoisovalerate), the penultimate precursor to L-isoleucine and L-valine, respectively. The protein is Dihydroxy-acid dehydratase of Prochlorococcus marinus (strain MIT 9215).